Here is a 247-residue protein sequence, read N- to C-terminus: UPF0246 protein CD630_18230 (247 aa).

The protein belongs to the UPF0246 family.

The sequence is that of UPF0246 protein CD630_18230 from Clostridioides difficile (strain 630) (Peptoclostridium difficile).